We begin with the raw amino-acid sequence, 383 residues long: S-adenosylmethionine synthase (383 aa).

Position 15 (His15) interacts with ATP. Asp17 contributes to the Mg(2+) binding site. A K(+)-binding site is contributed by Glu43. L-methionine-binding residues include Glu56 and Gln99. The flexible loop stretch occupies residues 99 to 109; that stretch reads QSQDINQGVDR. ATP contacts are provided by residues 164–166, 230–231, Asp239, 245–246, Ala262, and Lys266; these read DAK, RF, and RK. Residue Asp239 participates in L-methionine binding. Lys270 provides a ligand contact to L-methionine.

Belongs to the AdoMet synthase family. In terms of assembly, homotetramer; dimer of dimers. It depends on Mg(2+) as a cofactor. K(+) is required as a cofactor.

The protein resides in the cytoplasm. The catalysed reaction is L-methionine + ATP + H2O = S-adenosyl-L-methionine + phosphate + diphosphate. It participates in amino-acid biosynthesis; S-adenosyl-L-methionine biosynthesis; S-adenosyl-L-methionine from L-methionine: step 1/1. Catalyzes the formation of S-adenosylmethionine (AdoMet) from methionine and ATP. The overall synthetic reaction is composed of two sequential steps, AdoMet formation and the subsequent tripolyphosphate hydrolysis which occurs prior to release of AdoMet from the enzyme. This Actinobacillus succinogenes (strain ATCC 55618 / DSM 22257 / CCUG 43843 / 130Z) protein is S-adenosylmethionine synthase.